Here is a 359-residue protein sequence, read N- to C-terminus: Caffeic acid 3-O-methyltransferase (359 aa).

126–132 (MNQDKVL) lines the substrate pocket. The tract at residues 158–176 (AFEYHGTDPRFNKVFNRGM) is substrate binding. S-adenosyl-L-methionine contacts are provided by Gly-204, Asp-227, Asp-247, Met-248, and Lys-261. The active-site Proton acceptor is the His-265.

It belongs to the class I-like SAM-binding methyltransferase superfamily. Cation-independent O-methyltransferase family. COMT subfamily. Homodimer. Fruit. Not expressed in leaf.

It carries out the reaction (E)-caffeate + S-adenosyl-L-methionine = (E)-ferulate + S-adenosyl-L-homocysteine + H(+). It participates in aromatic compound metabolism; phenylpropanoid biosynthesis. Catalyzes the conversion of caffeic acid to ferulic acid and of 5-hydroxyferulic acid to sinapic acid. The resulting products may subsequently be converted to the corresponding alcohols that are incorporated into lignins. This chain is Caffeic acid 3-O-methyltransferase (COMT), found in Capsicum annuum (Capsicum pepper).